We begin with the raw amino-acid sequence, 309 residues long: Aspartate carbamoyltransferase catalytic subunit (309 aa).

Carbamoyl phosphate contacts are provided by arginine 55 and threonine 56. Lysine 85 serves as a coordination point for L-aspartate. Residues arginine 106, histidine 135, and glutamine 138 each coordinate carbamoyl phosphate. The L-aspartate site is built by arginine 168 and arginine 230. Residues leucine 268 and proline 269 each contribute to the carbamoyl phosphate site.

The protein belongs to the aspartate/ornithine carbamoyltransferase superfamily. ATCase family. As to quaternary structure, heterododecamer (2C3:3R2) of six catalytic PyrB chains organized as two trimers (C3), and six regulatory PyrI chains organized as three dimers (R2).

The catalysed reaction is carbamoyl phosphate + L-aspartate = N-carbamoyl-L-aspartate + phosphate + H(+). The protein operates within pyrimidine metabolism; UMP biosynthesis via de novo pathway; (S)-dihydroorotate from bicarbonate: step 2/3. In terms of biological role, catalyzes the condensation of carbamoyl phosphate and aspartate to form carbamoyl aspartate and inorganic phosphate, the committed step in the de novo pyrimidine nucleotide biosynthesis pathway. The chain is Aspartate carbamoyltransferase catalytic subunit from Vibrio campbellii (strain ATCC BAA-1116).